Reading from the N-terminus, the 249-residue chain is ATP synthase subunit a, chloroplastic (249 aa).

5 helical membrane-spanning segments follow: residues 38–58, 97–117, 136–156, 201–221, and 222–242; these read AQVLITSWIVIAILLSLAVLA, VPFIGTMFLFIFVSNWSGALL, INTTVALALLTSVAYFYAGLH, LVVAVLISLVPLVVPIPMMFL, and GLFTSAIQALIFATLAAAYIG.

Belongs to the ATPase A chain family. As to quaternary structure, F-type ATPases have 2 components, CF(1) - the catalytic core - and CF(0) - the membrane proton channel. CF(1) has five subunits: alpha(3), beta(3), gamma(1), delta(1), epsilon(1). CF(0) has four main subunits: a, b, b' and c.

Its subcellular location is the plastid. The protein localises to the chloroplast thylakoid membrane. Its function is as follows. Key component of the proton channel; it plays a direct role in the translocation of protons across the membrane. The sequence is that of ATP synthase subunit a, chloroplastic from Physcomitrium patens (Spreading-leaved earth moss).